The following is a 386-amino-acid chain: GTPase Obg (386 aa).

The 159-residue stretch at 1–159 (MKFVDEASIL…RELLLELMLL (159 aa)) folds into the Obg domain. The interval 127-147 (NTRFKSSVNRTPRQKTNGTPG) is disordered. Positions 129-145 (RFKSSVNRTPRQKTNGT) are enriched in polar residues. The OBG-type G domain occupies 160–333 (ADVGMLGMPN…LCWDVMTFII (174 aa)). Residues 166–173 (GMPNAGKS), 191–195 (FTTLV), 213–216 (DIPG), 283–286 (NKID), and 314–316 (SAA) contribute to the GTP site. Residues Ser-173 and Thr-193 each contribute to the Mg(2+) site.

Belongs to the TRAFAC class OBG-HflX-like GTPase superfamily. OBG GTPase family. Monomer. Mg(2+) serves as cofactor.

Its subcellular location is the cytoplasm. An essential GTPase which binds GTP, GDP and possibly (p)ppGpp with moderate affinity, with high nucleotide exchange rates and a fairly low GTP hydrolysis rate. Plays a role in control of the cell cycle, stress response, ribosome biogenesis and in those bacteria that undergo differentiation, in morphogenesis control. The polypeptide is GTPase Obg (Escherichia coli (strain UTI89 / UPEC)).